The following is a 287-amino-acid chain: ATP synthase gamma chain (287 aa).

It belongs to the ATPase gamma chain family. In terms of assembly, F-type ATPases have 2 components, CF(1) - the catalytic core - and CF(0) - the membrane proton channel. CF(1) has five subunits: alpha(3), beta(3), gamma(1), delta(1), epsilon(1). CF(0) has three main subunits: a, b and c.

Its subcellular location is the cell inner membrane. Its function is as follows. Produces ATP from ADP in the presence of a proton gradient across the membrane. The gamma chain is believed to be important in regulating ATPase activity and the flow of protons through the CF(0) complex. The chain is ATP synthase gamma chain from Colwellia maris.